The following is a 334-amino-acid chain: MMNLKYLLFFCLVQALHYCYAYGDPSLSNELDRFNPCPYSDDTVKMIILTRENKKHDFYTLNTIKNHNEFKKSTIKHQVVFITHGFTSTATAENFLAMAEALLDKGNYLVILIDWRVAACTNEMAGVKLAYYSYAASNTRLVGNYIATVTKMLVQQYNVPMANIRLIGHSLGAHTSGFAGKKVQELRLGKYSEIIGLDPAGPSFKSQECSQRICETDANYVQIIHTSNHLGTLVTLGTVDFYMNNGYNQPGCGLPIIGETCSHTRAVKYFTECIRHECCLIGVPQSKNPQPVSKCTRNECVCVGLNAKTYPKTGSFYVPVESKAPYCNNKGKII.

An N-terminal signal peptide occupies residues 1–23 (MMNLKYLLFFCLVQALHYCYAYG). Positions 24-33 (DPSLSNELDR) are excised as a propeptide. Cys37 and Cys120 are joined by a disulfide. The Nucleophile role is filled by Ser170. The active-site Charge relay system is the Asp198. 2 cysteine pairs are disulfide-bonded: Cys209–Cys214 and Cys252–Cys261. His263 (charge relay system) is an active-site residue. 3 disulfide bridges follow: Cys278–Cys302, Cys279–Cys327, and Cys295–Cys300.

Belongs to the AB hydrolase superfamily. Lipase family. Post-translationally, not glycosylated. As to expression, expressed by the venom gland.

Its subcellular location is the secreted. It catalyses the reaction a 1,2-diacyl-sn-glycero-3-phosphocholine + H2O = a 2-acyl-sn-glycero-3-phosphocholine + a fatty acid + H(+). Functionally, catalyzes the hydrolysis of phosphatidylcholine with phospholipase A1 activity (3.6 U/ml). May act as an allergen and induce hemolytic activity. In vivo, a mixture of this protein and Ves a 1.02 is able to paralyze crickets. The protein is Phospholipase A1 1 of Vespa affinis (Lesser banded hornet).